The primary structure comprises 710 residues: Conserved oligomeric Golgi complex subunit 2 (710 aa).

This sequence belongs to the COG2 family. In terms of assembly, component of the conserved oligomeric Golgi complex which is composed of eight different subunits and is required for normal Golgi morphology and localization.

It localises to the golgi apparatus membrane. Its function is as follows. Required for normal Golgi morphology and function. This Drosophila melanogaster (Fruit fly) protein is Conserved oligomeric Golgi complex subunit 2.